A 342-amino-acid polypeptide reads, in one-letter code: Probable dual-specificity RNA methyltransferase RlmN (342 aa).

E91 (proton acceptor) is an active-site residue. The region spanning Y97–D326 is the Radical SAM core domain. A disulfide bond links C104 and C331. [4Fe-4S] cluster is bound by residues C111, C115, and C118. S-adenosyl-L-methionine is bound by residues G157 to E158, S189, S212 to H214, and N288. C331 functions as the S-methylcysteine intermediate in the catalytic mechanism.

The protein belongs to the radical SAM superfamily. RlmN family. [4Fe-4S] cluster is required as a cofactor.

The protein resides in the cytoplasm. It carries out the reaction adenosine(2503) in 23S rRNA + 2 reduced [2Fe-2S]-[ferredoxin] + 2 S-adenosyl-L-methionine = 2-methyladenosine(2503) in 23S rRNA + 5'-deoxyadenosine + L-methionine + 2 oxidized [2Fe-2S]-[ferredoxin] + S-adenosyl-L-homocysteine. The catalysed reaction is adenosine(37) in tRNA + 2 reduced [2Fe-2S]-[ferredoxin] + 2 S-adenosyl-L-methionine = 2-methyladenosine(37) in tRNA + 5'-deoxyadenosine + L-methionine + 2 oxidized [2Fe-2S]-[ferredoxin] + S-adenosyl-L-homocysteine. In terms of biological role, specifically methylates position 2 of adenine 2503 in 23S rRNA and position 2 of adenine 37 in tRNAs. This is Probable dual-specificity RNA methyltransferase RlmN from Thermoanaerobacter pseudethanolicus (strain ATCC 33223 / 39E) (Clostridium thermohydrosulfuricum).